The chain runs to 436 residues: Glutamyl-tRNA reductase (436 aa).

Substrate is bound by residues 49 to 52 (TCNR), Ser109, 114 to 116 (EGQ), and Gln120. Catalysis depends on Cys50, which acts as the Nucleophile. An NADP(+)-binding site is contributed by 198-203 (GAGRMS).

This sequence belongs to the glutamyl-tRNA reductase family. In terms of assembly, homodimer.

The catalysed reaction is (S)-4-amino-5-oxopentanoate + tRNA(Glu) + NADP(+) = L-glutamyl-tRNA(Glu) + NADPH + H(+). It participates in porphyrin-containing compound metabolism; protoporphyrin-IX biosynthesis; 5-aminolevulinate from L-glutamyl-tRNA(Glu): step 1/2. It functions in the pathway porphyrin-containing compound metabolism; chlorophyll biosynthesis. In terms of biological role, catalyzes the NADPH-dependent reduction of glutamyl-tRNA(Glu) to glutamate 1-semialdehyde (GSA). In Prochlorococcus marinus (strain MIT 9303), this protein is Glutamyl-tRNA reductase.